The primary structure comprises 179 residues: Peptide methionine sulfoxide reductase MsrA (179 aa).

Cys14 is a catalytic residue.

This sequence belongs to the MsrA Met sulfoxide reductase family.

It carries out the reaction L-methionyl-[protein] + [thioredoxin]-disulfide + H2O = L-methionyl-(S)-S-oxide-[protein] + [thioredoxin]-dithiol. The catalysed reaction is [thioredoxin]-disulfide + L-methionine + H2O = L-methionine (S)-S-oxide + [thioredoxin]-dithiol. Has an important function as a repair enzyme for proteins that have been inactivated by oxidation. Catalyzes the reversible oxidation-reduction of methionine sulfoxide in proteins to methionine. The polypeptide is Peptide methionine sulfoxide reductase MsrA (Nitrobacter winogradskyi (strain ATCC 25391 / DSM 10237 / CIP 104748 / NCIMB 11846 / Nb-255)).